We begin with the raw amino-acid sequence, 423 residues long: Elongation factor 1-alpha (423 aa).

The tr-type G domain occupies 5–221 (KEHINVAFIG…DLLKPPEKLV (217 aa)). Positions 14 to 21 (GHVDHGKS) are G1. 14–21 (GHVDHGKS) is a GTP binding site. Ser-21 is a Mg(2+) binding site. Residues 70–74 (GVTID) are G2. A G3 region spans residues 91–94 (DCPG). GTP contacts are provided by residues 91 to 95 (DCPGH) and 146 to 149 (NKMD). Residues 146 to 149 (NKMD) form a G4 region. Residues 185-187 (SAY) are G5.

Belongs to the TRAFAC class translation factor GTPase superfamily. Classic translation factor GTPase family. EF-Tu/EF-1A subfamily.

It localises to the cytoplasm. It carries out the reaction GTP + H2O = GDP + phosphate + H(+). GTP hydrolase that promotes the GTP-dependent binding of aminoacyl-tRNA to the A-site of ribosomes during protein biosynthesis. This Archaeoglobus fulgidus (strain ATCC 49558 / DSM 4304 / JCM 9628 / NBRC 100126 / VC-16) protein is Elongation factor 1-alpha.